The chain runs to 236 residues: Rab-like protein 3 (236 aa).

The small GTPase-like stretch occupies residues 1 to 236 (MASLDRVKVL…GGTLKSLHYD (236 aa)). Residues 16–21 (GVGKSS), 148–150 (KLD), and 179–180 (DC) each bind GTP.

It belongs to the small GTPase superfamily. Rab family. In terms of assembly, homodimer. Interacts with GPR89; the interaction stabilizes GPR89. Interacts with RAP1GDS1.

In terms of biological role, required for KRAS signaling regulation and modulation of cell proliferation. Regulator of KRAS prenylation, and probably prenylation of other small GTPases. Required for lymphocyte development and function. Not required for myeloid cell development. This chain is Rab-like protein 3 (RABL3), found in Bos taurus (Bovine).